The following is a 191-amino-acid chain: Pyridoxal 5'-phosphate synthase subunit PdxT (191 aa).

46–48 (GES) provides a ligand contact to L-glutamine. Cys78 (nucleophile) is an active-site residue. Residues Arg105 and 133–134 (IR) each bind L-glutamine. Residues His169 and Glu171 each act as charge relay system in the active site.

Belongs to the glutaminase PdxT/SNO family. In the presence of PdxS, forms a dodecamer of heterodimers. Only shows activity in the heterodimer.

The enzyme catalyses aldehydo-D-ribose 5-phosphate + D-glyceraldehyde 3-phosphate + L-glutamine = pyridoxal 5'-phosphate + L-glutamate + phosphate + 3 H2O + H(+). It catalyses the reaction L-glutamine + H2O = L-glutamate + NH4(+). The protein operates within cofactor biosynthesis; pyridoxal 5'-phosphate biosynthesis. Functionally, catalyzes the hydrolysis of glutamine to glutamate and ammonia as part of the biosynthesis of pyridoxal 5'-phosphate. The resulting ammonia molecule is channeled to the active site of PdxS. This Fervidobacterium nodosum (strain ATCC 35602 / DSM 5306 / Rt17-B1) protein is Pyridoxal 5'-phosphate synthase subunit PdxT.